The primary structure comprises 629 residues: Dapper homolog 3 (629 aa).

Ser6 carries the post-translational modification Phosphoserine. Disordered regions lie at residues 50–76 (PGMGGAEAEDEEDADEDEDAAAARRAA) and 105–574 (GGLE…GGLV). The span at 56–69 (EAEDEEDADEDEDA) shows a compositional bias: acidic residues. Residues 63 to 87 (ADEDEDAAAARRAAAALEEQLEALP) are a coiled coil. Residues 105-150 (GGLEQESGRSSGFYEDPSSTGGPDSPPSTFCGDSGFSGSSSYGRLG) show a composition bias toward low complexity. Ser165 and Ser239 each carry phosphoserine. The residue at position 258 (Arg258) is an Omega-N-methylarginine. Residues 301–311 (PAREPSLERVG) are compositionally biased toward basic and acidic residues. Positions 316–335 (SPAALSRAWASSWESEAAPE) are enriched in low complexity. A compositionally biased stretch (pro residues) spans 336–348 (PAAPPAAPSPPDS). Phosphoserine is present on residues Ser426 and Ser478. Residues 525-535 (SAGRLGPLGRR) are compositionally biased toward low complexity. Positions 536–546 (GPAGGVGGGYG) are enriched in gly residues. Over residues 547 to 568 (ESESSASEGESPAFSSASSDSD) the composition is skewed to low complexity. The PDZ-binding motif lies at 626–629 (MTTV).

The protein belongs to the dapper family. As to quaternary structure, can form homodimers and heterodimers with DACT1 or DACT3. Interacts with CSNK1D, PKA catalytic subunit, PKC-type kinase, DVL1, DVL3, VANGL1, VANGL2 and CTNND1. Interacts with DVL2.

May be involved in regulation of intracellular signaling pathways during development. Specifically thought to play a role in canonical and/or non-canonical Wnt signaling pathways through interaction with DSH (Dishevelled) family proteins. The sequence is that of Dapper homolog 3 (DACT3) from Homo sapiens (Human).